A 709-amino-acid chain; its full sequence is ATP-binding cassette sub-family F member 3 (709 aa).

Alanine 2 is subject to N-acetylalanine. Serine 83 is modified (phosphoserine). The span at arginine 129 to leucine 143 shows a compositional bias: basic and acidic residues. A disordered region spans residues arginine 129–glycine 171. Phosphoserine occurs at positions 155, 157, and 161. The span at serine 161–glycine 171 shows a compositional bias: basic and acidic residues. ABC transporter domains are found at residues valine 178 to glutamine 424 and leucine 492 to glycine 707. Glycine 210 to threonine 217 is a binding site for ATP. Residue serine 283 is modified to Phosphoserine. Glycine 525–serine 532 serves as a coordination point for ATP.

The protein belongs to the ABC transporter superfamily. ABCF family. EF3 subfamily.

Functionally, displays an antiviral effect against flaviviruses in the presence of OAS1B. The polypeptide is ATP-binding cassette sub-family F member 3 (ABCF3) (Pongo abelii (Sumatran orangutan)).